The chain runs to 259 residues: 5'-nucleotidase SurE (259 aa).

4 residues coordinate a divalent metal cation: aspartate 11, aspartate 12, serine 42, and asparagine 99.

It belongs to the SurE nucleotidase family. A divalent metal cation serves as cofactor.

It localises to the cytoplasm. It catalyses the reaction a ribonucleoside 5'-phosphate + H2O = a ribonucleoside + phosphate. Its function is as follows. Nucleotidase that shows phosphatase activity on nucleoside 5'-monophosphates. The chain is 5'-nucleotidase SurE from Cytophaga hutchinsonii (strain ATCC 33406 / DSM 1761 / CIP 103989 / NBRC 15051 / NCIMB 9469 / D465).